Consider the following 1919-residue polypeptide: Disks large homolog 5 (1919 aa).

The disordered stretch occupies residues 98–142 (AEGAGSTYSVLSTMPSDSESSSSLSSVGTTGKAPSPPPLLTDQQV). Residues 109-123 (STMPSDSESSSSLSS) are compositionally biased toward low complexity. 2 positions are modified to phosphoserine: Ser-264 and Ser-295. Residues 383 to 599 (LNKATAQNKD…LEKEARFRQL (217 aa)) are a coiled coil. 2 consecutive PDZ domains span residues 620 to 710 (VVEF…RRRK) and 705 to 796 (VVRR…LKVF). A Phosphoserine modification is found at Ser-900. Disordered regions lie at residues 927–1122 (GVGE…FRPK), 1150–1187 (QEWA…PSTT), 1201–1230 (SHRV…HQGR), 1245–1264 (EMRA…LGSS), and 1271–1306 (AERI…PQSP). Thr-984 bears the Phosphothreonine mark. Ser-1000 carries the phosphoserine modification. At Thr-1011 the chain carries Phosphothreonine. Over residues 1017–1030 (RRSDSIKFQHRLET) the composition is skewed to basic and acidic residues. Ser-1021 bears the Phosphoserine mark. A compositionally biased stretch (pro residues) spans 1045-1055 (TSPPSALPPDV). At Thr-1183 the chain carries Phosphothreonine. Phosphoserine is present on residues Ser-1209 and Ser-1263. 2 stretches are compositionally biased toward low complexity: residues 1252–1264 (SNSL…LGSS) and 1284–1298 (RSVV…SHSE). The residue at position 1334 (Ser-1334) is a Phosphoserine. In terms of domain architecture, PDZ 3 spans 1350–1429 (HVKVQKGSEP…TITILAQYNP (80 aa)). The disordered stretch occupies residues 1434–1493 (LSSHSRSSSHLDPAGTHSTLQGSGTTTPEHPSVIDPLMEQDEGPSTPPAKQSSSRIAGDA). Residues 1449 to 1462 (THSTLQGSGTTTPE) show a composition bias toward polar residues. A PDZ 4 domain is found at 1501-1582 (RVVFIKKSQL…GVRLKVQYRP (82 aa)). The region spanning 1593 to 1661 (GDSFYIRALY…PSKYVMDQEF (69 aa)) is the SH3 domain. Residue Ser-1666 is modified to Phosphoserine. The 184-residue stretch at 1722 to 1905 (DSVSLAYQRV…ICTQILAMVN (184 aa)) folds into the Guanylate kinase-like domain.

Belongs to the MAGUK family. Interacts with MPP1. Interacts with CTNNB1 and with the third SH3 domain of SORBS3 to form a ternary complex. Interacts (via coiled-coil domain) with MARK3. Interacts (via PDZ domain 3) with STK3/MST2 and STK4/MST1. Interacts with SCRIB. Interacts with CTNB1, SMO and (via PDZ4 or guanylate kinase-like domain) with KIF7. As to expression, highly expressed in normal breast tissues and low-grade breast cancer tissues (at protein level). Highly expressed in the placenta and prostate. Expressed at a lower level in the thyroid, spinal cord, trachea, adrenal gland, skeletal muscle, pancreas, heart, brain, liver and kidney. A short splice product shows more limited expression, being absent from at least the brain.

It is found in the cell junction. Its subcellular location is the cell membrane. The protein resides in the postsynaptic density. The protein localises to the cytoplasm. It localises to the cytoskeleton. It is found in the cilium basal body. In terms of biological role, acts as a regulator of the Hippo signaling pathway. Negatively regulates the Hippo signaling pathway by mediating the interaction of MARK3 with STK3/4, bringing them together to promote MARK3-dependent hyperphosphorylation and inactivation of STK3 kinase activity toward LATS1. Positively regulates the Hippo signaling pathway by mediating the interaction of SCRIB with STK4/MST1 and LATS1 which is important for the activation of the Hippo signaling pathway. Involved in regulating cell proliferation, maintenance of epithelial polarity, epithelial-mesenchymal transition (EMT), cell migration and invasion. Plays an important role in dendritic spine formation and synaptogenesis in cortical neurons; regulates synaptogenesis by enhancing the cell surface localization of N-cadherin. Acts as a positive regulator of hedgehog (Hh) signaling pathway. Plays a critical role in the early point of the SMO activity cycle by interacting with SMO at the ciliary base to induce the accumulation of KIF7 and GLI2 at the ciliary tip for GLI2 activation. This chain is Disks large homolog 5 (DLG5), found in Homo sapiens (Human).